Here is a 109-residue protein sequence, read N- to C-terminus: Large ribosomal subunit protein uL22 (109 aa).

Belongs to the universal ribosomal protein uL22 family. As to quaternary structure, part of the 50S ribosomal subunit.

Functionally, this protein binds specifically to 23S rRNA; its binding is stimulated by other ribosomal proteins, e.g. L4, L17, and L20. It is important during the early stages of 50S assembly. It makes multiple contacts with different domains of the 23S rRNA in the assembled 50S subunit and ribosome. The globular domain of the protein is located near the polypeptide exit tunnel on the outside of the subunit, while an extended beta-hairpin is found that lines the wall of the exit tunnel in the center of the 70S ribosome. This Ralstonia pickettii (strain 12J) protein is Large ribosomal subunit protein uL22.